Reading from the N-terminus, the 246-residue chain is tRNA (guanine-N(1)-)-methyltransferase (246 aa).

S-adenosyl-L-methionine-binding positions include Gly-113 and 132-137 (LGDYVL).

This sequence belongs to the RNA methyltransferase TrmD family. In terms of assembly, homodimer.

The protein resides in the cytoplasm. It catalyses the reaction guanosine(37) in tRNA + S-adenosyl-L-methionine = N(1)-methylguanosine(37) in tRNA + S-adenosyl-L-homocysteine + H(+). Its function is as follows. Specifically methylates guanosine-37 in various tRNAs. The chain is tRNA (guanine-N(1)-)-methyltransferase from Lactiplantibacillus plantarum (strain ATCC BAA-793 / NCIMB 8826 / WCFS1) (Lactobacillus plantarum).